Here is a 300-residue protein sequence, read N- to C-terminus: MTASALSKWPTCLACLRRLAQPFGTSAARHGEPRARAVPVIRPIVHTQTRAASHRMRLQDQGVVVRLLEDIPKFGRKHAIFRIERGRMRNEWFPKNKAEYMTPARFQELGLTRDAIGEVDRSFVIMSALEAATRPKPEEQKTEEPVPEVQISQVNVPDVTPETAHALLSELIPNTLTFHREPVPIPISQPKPALEPKISPLIARHVPASTPETPSTGEARRAIFGSVSSSDILNQIKALVSGHEEASRIVLGPSSVKIVGLAEDNDRIRHLGRWEIEIAVARAGGLDPVRKSVEILPSAQ.

This sequence belongs to the bacterial ribosomal protein bL9 family. In terms of assembly, component of the mitochondrial large ribosomal subunit (mt-LSU). Mature N.crassa 74S mitochondrial ribosomes consist of a small (37S) and a large (54S) subunit. The 37S small subunit contains a 16S ribosomal RNA (16S mt-rRNA) and 32 different proteins. The 54S large subunit contains a 23S rRNA (23S mt-rRNA) and 42 different proteins.

Its subcellular location is the mitochondrion. In terms of biological role, component of the mitochondrial ribosome (mitoribosome), a dedicated translation machinery responsible for the synthesis of mitochondrial genome-encoded proteins, including at least some of the essential transmembrane subunits of the mitochondrial respiratory chain. The mitoribosomes are attached to the mitochondrial inner membrane and translation products are cotranslationally integrated into the membrane. The polypeptide is Large ribosomal subunit protein bL9m (mrpl50) (Neurospora crassa (strain ATCC 24698 / 74-OR23-1A / CBS 708.71 / DSM 1257 / FGSC 987)).